The primary structure comprises 74 residues: Large ribosomal subunit protein bL31 (74 aa).

It belongs to the bacterial ribosomal protein bL31 family. Type A subfamily. As to quaternary structure, part of the 50S ribosomal subunit.

Binds the 23S rRNA. This Xanthobacter autotrophicus (strain ATCC BAA-1158 / Py2) protein is Large ribosomal subunit protein bL31.